Consider the following 595-residue polypeptide: Grainyhead-like protein 3 homolog (595 aa).

A transcription activation region spans residues 29 to 92 (DAWSKYLENP…CDQVKRSCSE (64 aa)). The region spanning 221–454 (ANRDFEYTLE…DMETHPVLFI (234 aa)) is the Grh/CP2 DB domain. The tract at residues 484 to 505 (SSQSFPKGLEAPPSKQQTSEDS) is disordered.

It belongs to the grh/CP2 family. Grainyhead subfamily.

The protein localises to the nucleus. Functionally, transcription factor playing important roles in primary neurulation and in the differentiation of stratified epithelia of both ectodermal and endodermal origin. Binds directly to the consensus DNA sequence 5'-AACCGGTT-3' acting as an activator and repressor on distinct target genes. In Xenopus laevis (African clawed frog), this protein is Grainyhead-like protein 3 homolog (grhl3).